An 800-amino-acid chain; its full sequence is Protein translocase subunit SecA (800 aa).

ATP-binding positions include glutamine 85, 103–107 (GEGKT), and aspartate 504.

The protein belongs to the SecA family. Monomer and homodimer. Part of the essential Sec protein translocation apparatus which comprises SecA, SecYEG and auxiliary proteins SecDF. Other proteins may also be involved.

The protein localises to the cell membrane. It localises to the cytoplasm. It catalyses the reaction ATP + H2O + cellular proteinSide 1 = ADP + phosphate + cellular proteinSide 2.. Functionally, part of the Sec protein translocase complex. Interacts with the SecYEG preprotein conducting channel. Has a central role in coupling the hydrolysis of ATP to the transfer of proteins into and across the cell membrane, serving as an ATP-driven molecular motor driving the stepwise translocation of polypeptide chains across the membrane. This chain is Protein translocase subunit SecA, found in Lactobacillus delbrueckii subsp. bulgaricus (strain ATCC 11842 / DSM 20081 / BCRC 10696 / JCM 1002 / NBRC 13953 / NCIMB 11778 / NCTC 12712 / WDCM 00102 / Lb 14).